The sequence spans 312 residues: Malate dehydrogenase (312 aa).

Residues 7–13 (GAAGGIG) and aspartate 34 contribute to the NAD(+) site. Substrate contacts are provided by arginine 81 and arginine 87. Residues asparagine 94 and 117–119 (ITN) each bind NAD(+). Substrate is bound by residues asparagine 119 and arginine 153. The active-site Proton acceptor is histidine 177. Methionine 227 is a binding site for NAD(+).

Belongs to the LDH/MDH superfamily. MDH type 1 family. In terms of assembly, homodimer.

The catalysed reaction is (S)-malate + NAD(+) = oxaloacetate + NADH + H(+). Its function is as follows. Catalyzes the reversible oxidation of malate to oxaloacetate. This is Malate dehydrogenase from Salmonella choleraesuis (strain SC-B67).